The chain runs to 61 residues: UPF0370 protein SG1720 (61 aa).

Residues 3–23 form a helical membrane-spanning segment; it reads WLADYWWVVLLVLAGMLIGGV. The segment covering 37-47 has biased composition (basic and acidic residues); it reads NRPELPPHRDN. Positions 37–61 are disordered; that stretch reads NRPELPPHRDNNAQWDEEDDWPKKP. The span at 51–61 shows a compositional bias: acidic residues; sequence WDEEDDWPKKP.

Belongs to the UPF0370 family.

The protein localises to the cell membrane. The polypeptide is UPF0370 protein SG1720 (Sodalis glossinidius (strain morsitans)).